Consider the following 352-residue polypeptide: DNA integrity scanning protein DisA (352 aa).

One can recognise a DAC domain in the interval 3–143; that stretch reads PQELIEKIKL…NYKYVVNQVD (141 aa). ATP contacts are provided by residues Gly-71, Leu-89, and 102-106; that span reads TRHRT.

It belongs to the DisA family. Homooctamer. The cofactor is Mg(2+).

It carries out the reaction 2 ATP = 3',3'-c-di-AMP + 2 diphosphate. In terms of biological role, participates in a DNA-damage check-point. DisA forms globular foci that rapidly scan along the chromosomes searching for lesions. Functionally, also has diadenylate cyclase activity, catalyzing the condensation of 2 ATP molecules into cyclic di-AMP (c-di-AMP). c-di-AMP likely acts as a signaling molecule that may couple DNA integrity with a cellular process. The chain is DNA integrity scanning protein DisA from Thermotoga neapolitana (strain ATCC 49049 / DSM 4359 / NBRC 107923 / NS-E).